Reading from the N-terminus, the 369-residue chain is Glutamate 5-kinase (369 aa).

An ATP-binding site is contributed by K9. S49, D136, and N148 together coordinate substrate. Residues 168-169 and 210-216 contribute to the ATP site; these read TD and TGGMLTK. One can recognise a PUA domain in the interval 275 to 355; sequence QGEIYVDQGA…KGVVIHRDDW (81 aa).

This sequence belongs to the glutamate 5-kinase family.

It is found in the cytoplasm. The catalysed reaction is L-glutamate + ATP = L-glutamyl 5-phosphate + ADP. It participates in amino-acid biosynthesis; L-proline biosynthesis; L-glutamate 5-semialdehyde from L-glutamate: step 1/2. In terms of biological role, catalyzes the transfer of a phosphate group to glutamate to form L-glutamate 5-phosphate. In Streptococcus gordonii (strain Challis / ATCC 35105 / BCRC 15272 / CH1 / DL1 / V288), this protein is Glutamate 5-kinase.